We begin with the raw amino-acid sequence, 182 residues long: ATP-dependent protease subunit HslV (182 aa).

The active site involves Thr-7. Gly-162, Cys-165, and Thr-168 together coordinate Na(+).

It belongs to the peptidase T1B family. HslV subfamily. As to quaternary structure, a double ring-shaped homohexamer of HslV is capped on each side by a ring-shaped HslU homohexamer. The assembly of the HslU/HslV complex is dependent on binding of ATP.

The protein resides in the cytoplasm. The catalysed reaction is ATP-dependent cleavage of peptide bonds with broad specificity.. Allosterically activated by HslU binding. In terms of biological role, protease subunit of a proteasome-like degradation complex believed to be a general protein degrading machinery. The protein is ATP-dependent protease subunit HslV of Legionella pneumophila (strain Lens).